A 103-amino-acid chain; its full sequence is Histone H4 (103 aa).

Gly residues predominate over residues 1–14; that stretch reads MSGRGKGGKGLGKG. A disordered region spans residues 1–20; it reads MSGRGKGGKGLGKGGAKRHR. An N-acetylserine modification is found at Ser-2. Lys-6 and Lys-13 each carry N6-acetyl-N6-methyllysine; alternate. Position 17 is an N6-acetyllysine (Lys-17). A DNA-binding region spans residues 17–21; that stretch reads KRHRR.

This sequence belongs to the histone H4 family. As to quaternary structure, the nucleosome is a histone octamer containing two molecules each of H2A, H2B, H3 and H4 assembled in one H3-H4 heterotetramer and two H2A-H2B heterodimers. The octamer wraps approximately 147 bp of DNA.

Its subcellular location is the nucleus. The protein localises to the chromosome. In terms of biological role, core component of nucleosome. Nucleosomes wrap and compact DNA into chromatin, limiting DNA accessibility to the cellular machineries which require DNA as a template. Histones thereby play a central role in transcription regulation, DNA repair, DNA replication and chromosomal stability. DNA accessibility is regulated via a complex set of post-translational modifications of histones, also called histone code, and nucleosome remodeling. The protein is Histone H4 of Mytilus chilensis (Chilean blue mussel).